The chain runs to 955 residues: Probable trehalose monomycolate exporter MmpL3 (955 aa).

At 1-13 the chain is on the cytoplasmic side; the sequence is MFAWWGRTVYRYR. The chain crosses the membrane as a helical span at residues 14–34; sequence FIVIGITVALCLCGGVFGLSL. Residues 35-190 are Periplasmic-facing; that stretch reads GKHVTQSGFY…TIATDQRRME (156 aa). 40 to 44 contacts a 1,2-diacylglycero-3-phosphoethanolamine; sequence QSGFY. Residues 191-213 form a helical membrane-spanning segment; it reads VLALPLVAVVLFLVFGGVIAACL. At 214-219 the chain is on the cytoplasmic side; sequence PVMVGG. The helical transmembrane segment at 220 to 236 threads the bilayer; the sequence is LSIAGALGILRFIALFG. The Periplasmic portion of the chain corresponds to 237 to 244; sequence PVHFFAQP. A helical membrane pass occupies residues 245 to 262; that stretch reads VVSLIGLGIAVDYGLFVV. The Cytoplasmic segment spans residues 263 to 291; the sequence is SRFREEIAEGYDTEAAVRRTVMTAGRTVT. Residues 292–312 traverse the membrane as a helical segment; the sequence is FSAVLIAASGASLLLLPQGFV. Residues 313–319 lie on the Periplasmic side of the membrane; it reads KSLTYAL. Residues 320-340 form a helical membrane-spanning segment; the sequence is IAAVTLAALLSITLLPACLAI. Residues 341–401 lie on the Cytoplasmic side of the membrane; sequence LAKHVDALGV…KLVNFVMKRP (61 aa). Residues 402-422 form a helical membrane-spanning segment; it reads LVFAIPIVIGMILLVIPLGNL. The Periplasmic segment spans residues 423–567; the sequence is SFGGMSEKYL…HSLVAQAPLM (145 aa). The chain crosses the membrane as a helical span at residues 568-588; sequence VIMLITTTMLLMFLAFGSFVL. The Cytoplasmic portion of the chain corresponds to 589-591; that stretch reads PIK. Residues 592–612 form a helical membrane-spanning segment; sequence AAVMSALTLGSTMGILTWIFV. Over 613–621 the chain is Periplasmic; that stretch reads DGHLSKWLN. A helical transmembrane segment spans residues 622 to 642; it reads FTPTPLMVVIIALVVAVGYGL. At 643–678 the chain is on the cytoplasmic side; the sequence is ATDYEVFLVSRMVEARAESMSTQEAVRIGTASTGRL. A helical transmembrane segment spans residues 679–699; it reads ITAAALVLAVVAGSFVFSDLV. Topologically, residues 700-703 are periplasmic; it reads MMKY. Residues 704-724 form a helical membrane-spanning segment; sequence LAFGLMAALLLDATVVRMFLV. The Cytoplasmic portion of the chain corresponds to 725–955; that stretch reads PSVMKLLGDD…QDLLRREGRL (231 aa). The interval 759-955 is disordered; that stretch reads ERRRPTVSGR…QDLLRREGRL (197 aa). Composition is skewed to polar residues over residues 821-860 and 890-902; these read GASTARIQMRPSQSVEATTTRLSVPGNAPTTAAVSSSQGV and NRSSDNASETAEP.

Belongs to the resistance-nodulation-cell division (RND) (TC 2.A.6) family. MmpL subfamily.

The protein localises to the cell inner membrane. The protein resides in the cell septum. It is found in the cell tip. Its function is as follows. Transports trehalose monomycolate (TMM) to the cell wall. Flips TMM across the inner membrane. Membrane potential is not required for this function. Transports probably phosphatidylethanolamine (PE) as well. Contributes to membrane potential, cell wall composition, antibiotic susceptibility and fitness. In Mycobacterium leprae (strain TN), this protein is Probable trehalose monomycolate exporter MmpL3 (mmpL3).